A 128-amino-acid polypeptide reads, in one-letter code: Small ribosomal subunit protein bS6 (128 aa).

It belongs to the bacterial ribosomal protein bS6 family.

Binds together with bS18 to 16S ribosomal RNA. The polypeptide is Small ribosomal subunit protein bS6 (Acinetobacter baylyi (strain ATCC 33305 / BD413 / ADP1)).